A 610-amino-acid chain; its full sequence is Dihydroxy-acid dehydratase (610 aa).

Aspartate 81 contacts Mg(2+). Residue cysteine 122 coordinates [2Fe-2S] cluster. Residues aspartate 123 and lysine 124 each contribute to the Mg(2+) site. Residue lysine 124 is modified to N6-carboxylysine. A [2Fe-2S] cluster-binding site is contributed by cysteine 193. Glutamate 489 serves as a coordination point for Mg(2+). Serine 515 functions as the Proton acceptor in the catalytic mechanism.

Belongs to the IlvD/Edd family. Homodimer. [2Fe-2S] cluster serves as cofactor. Mg(2+) is required as a cofactor.

The catalysed reaction is (2R)-2,3-dihydroxy-3-methylbutanoate = 3-methyl-2-oxobutanoate + H2O. It catalyses the reaction (2R,3R)-2,3-dihydroxy-3-methylpentanoate = (S)-3-methyl-2-oxopentanoate + H2O. Its pathway is amino-acid biosynthesis; L-isoleucine biosynthesis; L-isoleucine from 2-oxobutanoate: step 3/4. It participates in amino-acid biosynthesis; L-valine biosynthesis; L-valine from pyruvate: step 3/4. Functionally, functions in the biosynthesis of branched-chain amino acids. Catalyzes the dehydration of (2R,3R)-2,3-dihydroxy-3-methylpentanoate (2,3-dihydroxy-3-methylvalerate) into 2-oxo-3-methylpentanoate (2-oxo-3-methylvalerate) and of (2R)-2,3-dihydroxy-3-methylbutanoate (2,3-dihydroxyisovalerate) into 2-oxo-3-methylbutanoate (2-oxoisovalerate), the penultimate precursor to L-isoleucine and L-valine, respectively. In Xylella fastidiosa (strain 9a5c), this protein is Dihydroxy-acid dehydratase.